The sequence spans 1067 residues: MTNFKFSLLACSIAFALNASTAYAAQPTNQPTNQPTNQPTNQPTNQPTNQNSNVSEQLEQINVSGSSENINIKEKKVGETQISAKKLAKQQASDSRDLVRYETGITVVETGRTGASGYAVRGVDENRVGIMVDGLRQAETLSSQGFKELFEGYGNFNNTRNSIEIENVKTATITKGADSLKSGSGALGGSVIFETKDARDYLIDKDYYLSYKRGYQTMNNQNLKTLTLAGRSKKFDILVVDTKRDGHEIENYDYKIYPNKQADLRAVGPTREKADPYQITRQSTLIKLGFQPNENHRLSVALDDSTLETKGIDLSYALRPYSTAGNEKYGERIINDQSKRKNIQFSYENFSQTPFWDHIKLSYSSQKITNKARSDEYCHQSTCPGVRNPQGLHLVEKDGTYRIVDKDNNDFHYKKDDSDLWAWGKELHNSKGKKISDDVDTKGGSLDSVLINCEKLDCSKRFRIYQEYDENSSEKYTYDDREIKVETLPNGKKYGKIPLKKGEKLFSQEEARFLFPKSHGYSTDFVNDRDLNTHTQQIKLDLDKEFHLWHTQHQLKYGGLYEKTLKSMVNHQYNTAANVQWWADYFFCARQEGGNLGGEKKPRPDISVAGCANGTLLHSDIGKDTYLIPVTTKNNVLYFGDNVQLTSWLGLDLNYRYDHVKYLPSYDKNIPVPKGLITGLFKKFKSTDYVYGKKYSKPDGYTDCTYDTPCYKQNFKDNLALLLRKTDYKHHSYNLGLNLDPTDWLRVQLKYANGFRAPTSDEIYMTFKHPQFSIQPNTDLKAETSKTKEVAFTFYKNSSYITLNAFQNDYRNFIDLVEVGERPIEEDSVVRYPFHQNQNRDRARVRGIEIASRLEIGDLFEKLQGFHLGYKFTYQKGRIKDNGLHPKYKEFLKLNKDQHPEYEAIARKPQPMNALQPTTSVYNIGYDAPSQKWGVDMYITNVAAKKAKDSFNSQWTSMVERKEKQYTDITDIKASKANGKEVKDSRGLWRNNRYTVIDTIAYWKPIKNLTFTAGVYNLTNKKYLTWDSARSIRHIGTINRVKTETGKGLNRFYAPGRNYRMSVQFEF.

Positions 1–24 (MTNFKFSLLACSIAFALNASTAYA) are cleaved as a signal peptide. 6 tandem repeats follow at residues 26–29 (QPTN), 30–33 (QPTN), 34–37 (QPTN), 38–41 (QPTN), 42–45 (QPTN), and 46–49 (QPTN). A 6 X 4 AA tandem repeats of Q-P-T-N region spans residues 26 to 49 (QPTNQPTNQPTNQPTNQPTNQPTN). The segment covering 26–51 (QPTNQPTNQPTNQPTNQPTNQPTNQN) has biased composition (low complexity). The interval 26–53 (QPTNQPTNQPTNQPTNQPTNQPTNQNSN) is disordered. Residues 59-66 (EQINVSGS) carry the TonB box motif. Positions 71-196 (NIKEKKVGET…LGGSVIFETK (126 aa)) constitute a TBDR plug domain. The 864-residue stretch at 204-1067 (DKDYYLSYKR…NYRMSVQFEF (864 aa)) folds into the TBDR beta-barrel domain. The TonB C-terminal box motif lies at 1050–1067 (NRFYAPGRNYRMSVQFEF).

The protein belongs to the TonB-dependent receptor family. Hemoglobin/haptoglobin binding protein subfamily.

The protein resides in the cell outer membrane. In terms of biological role, acts as a receptor for hemoglobin or the hemoglobin/haptoglobin complex of the human host and is required for heme uptake. This Haemophilus influenzae protein is Hemoglobin and hemoglobin-haptoglobin-binding protein B (hgbB).